Reading from the N-terminus, the 382-residue chain is UDP-N-acetylenolpyruvoylglucosamine reductase (382 aa).

The 204-residue stretch at 50 to 253 folds into the FAD-binding PCMH-type domain; sequence RVGGPAVLAE…REAVLRLRAS (204 aa). Residue arginine 193 is part of the active site. The active-site Proton donor is the serine 270. Residue glutamate 374 is part of the active site.

The protein belongs to the MurB family. It depends on FAD as a cofactor.

It is found in the cytoplasm. It catalyses the reaction UDP-N-acetyl-alpha-D-muramate + NADP(+) = UDP-N-acetyl-3-O-(1-carboxyvinyl)-alpha-D-glucosamine + NADPH + H(+). It functions in the pathway cell wall biogenesis; peptidoglycan biosynthesis. Cell wall formation. This is UDP-N-acetylenolpyruvoylglucosamine reductase from Nocardia farcinica (strain IFM 10152).